Reading from the N-terminus, the 114-residue chain is Prefoldin subunit 6 (114 aa).

Ser-2 is modified (N-acetylserine).

It belongs to the prefoldin subunit beta family. In terms of assembly, heterohexamer of two PFD-alpha type and four PFD-beta type subunits.

It localises to the nucleus. In terms of biological role, binds specifically to cytosolic chaperonin (c-CPN) and transfers target proteins to it. Binds to nascent polypeptide chain and promotes folding in an environment in which there are many competing pathways for nonnative proteins. The chain is Prefoldin subunit 6 (YKE2) from Saccharomyces cerevisiae (strain ATCC 204508 / S288c) (Baker's yeast).